The sequence spans 412 residues: AA9 family lytic polysaccharide monooxygenase A (412 aa).

A signal peptide spans 1–20 (MKTTTYSLLALAAASKLASA). 2 residues coordinate Cu(2+): H21 and H103. A disulfide bond links C63 and C186. A glycan (N-linked (GlcNAc...) asparagine) is linked at N151. O2 is bound at residue H172. Y183 lines the Cu(2+) pocket. N-linked (GlcNAc...) asparagine glycans are attached at residues N334 and N385. The CBM1 domain occupies 373 to 409 (GVAKMYERCGGINHTGPTTCESGSVCKKWNPYYYQCV).

Belongs to the polysaccharide monooxygenase AA9 family. It depends on Cu(2+) as a cofactor.

It is found in the secreted. It carries out the reaction [(1-&gt;4)-beta-D-glucosyl]n+m + reduced acceptor + O2 = 4-dehydro-beta-D-glucosyl-[(1-&gt;4)-beta-D-glucosyl]n-1 + [(1-&gt;4)-beta-D-glucosyl]m + acceptor + H2O.. In terms of biological role, lytic polysaccharide monooxygenase (LPMO) that depolymerizes crystalline and amorphous polysaccharides via the oxidation of scissile alpha- or beta-(1-4)-glycosidic bonds, yielding C4 oxidation products. Catalysis by LPMOs requires the reduction of the active-site copper from Cu(II) to Cu(I) by a reducing agent and H(2)O(2) or O(2) as a cosubstrate. The chain is AA9 family lytic polysaccharide monooxygenase A (eglD) from Aspergillus niger (strain ATCC MYA-4892 / CBS 513.88 / FGSC A1513).